Reading from the N-terminus, the 66-residue chain is UPF0370 protein YpfN (66 aa).

A helical membrane pass occupies residues 4 to 24; it reads LAKYWWILVLVFLVGVLLNVI. Residues 39 to 66 are disordered; that stretch reads KPELPPHRDFNDKWDDEDGWPKKDQPKK. Basic and acidic residues predominate over residues 42 to 66; it reads LPPHRDFNDKWDDEDGWPKKDQPKK.

The protein belongs to the UPF0370 family.

The protein resides in the cell membrane. This chain is UPF0370 protein YpfN, found in Salmonella paratyphi B (strain ATCC BAA-1250 / SPB7).